A 534-amino-acid chain; its full sequence is Solute carrier family 22 member 15 (534 aa).

Residues 22-42 (FLLAVLLQLYSATEAIIITIL) form a helical membrane-spanning segment. N52, N58, and N83 each carry an N-linked (GlcNAc...) asparagine glycan. The next 11 helical transmembrane spans lie at 97-117 (AAYE…IGVI), 136-156 (LALE…PLFL), 161-181 (LVGV…NECI), 191-211 (SLGS…GYFI), 216-236 (LLAL…LCIP), 297-317 (TLIM…LTLS), 327-347 (LNLA…MYLI), 356-376 (GSLA…MLVP), 391-411 (TLSL…YIYS), 424-444 (MGVC…IPAL), and 450-470 (ALPF…SLLL). An N-linked (GlcNAc...) asparagine glycan is attached at N513.

The protein belongs to the major facilitator (TC 2.A.1) superfamily. Organic cation transporter (TC 2.A.1.19) family.

The protein resides in the membrane. Probably transports organic cations. The polypeptide is Solute carrier family 22 member 15 (slc22a15) (Xenopus tropicalis (Western clawed frog)).